The primary structure comprises 144 residues: Cell division protein SepF (144 aa).

A compositionally biased stretch (acidic residues) spans 14–31 (EDDEMNEVPYTESEEQQE). A disordered region spans residues 14 to 41 (EDDEMNEVPYTESEEQQEEIPQTQKNER).

The protein belongs to the SepF family. As to quaternary structure, homodimer. Interacts with FtsZ.

The protein resides in the cytoplasm. Cell division protein that is part of the divisome complex and is recruited early to the Z-ring. Probably stimulates Z-ring formation, perhaps through the cross-linking of FtsZ protofilaments. Its function overlaps with FtsA. The protein is Cell division protein SepF of Lactobacillus johnsonii (strain CNCM I-12250 / La1 / NCC 533).